Reading from the N-terminus, the 174-residue chain is Large ribosomal subunit protein uL16 (174 aa).

Belongs to the universal ribosomal protein uL16 family.

The polypeptide is Large ribosomal subunit protein uL16 (Staphylothermus marinus (strain ATCC 43588 / DSM 3639 / JCM 9404 / F1)).